The primary structure comprises 480 residues: tRNA-2-methylthio-N(6)-dimethylallyladenosine synthase (480 aa).

Positions 43–161 (KLYCLNTFGC…FPELLYSAMD (119 aa)) constitute an MTTase N-terminal domain. 6 residues coordinate [4Fe-4S] cluster: Cys-52, Cys-88, Cys-122, Cys-198, Cys-202, and Cys-205. Residues 184-414 (RKDGVKAWVT…LETQNRISKE (231 aa)) form the Radical SAM core domain. The region spanning 417 to 480 (DTFLGKVVEV…TWSLEGSIVR (64 aa)) is the TRAM domain.

This sequence belongs to the methylthiotransferase family. MiaB subfamily. Monomer. The cofactor is [4Fe-4S] cluster.

It localises to the cytoplasm. It catalyses the reaction N(6)-dimethylallyladenosine(37) in tRNA + (sulfur carrier)-SH + AH2 + 2 S-adenosyl-L-methionine = 2-methylsulfanyl-N(6)-dimethylallyladenosine(37) in tRNA + (sulfur carrier)-H + 5'-deoxyadenosine + L-methionine + A + S-adenosyl-L-homocysteine + 2 H(+). In terms of biological role, catalyzes the methylthiolation of N6-(dimethylallyl)adenosine (i(6)A), leading to the formation of 2-methylthio-N6-(dimethylallyl)adenosine (ms(2)i(6)A) at position 37 in tRNAs that read codons beginning with uridine. The polypeptide is tRNA-2-methylthio-N(6)-dimethylallyladenosine synthase (Acetivibrio thermocellus (strain ATCC 27405 / DSM 1237 / JCM 9322 / NBRC 103400 / NCIMB 10682 / NRRL B-4536 / VPI 7372) (Clostridium thermocellum)).